Reading from the N-terminus, the 390-residue chain is Putative 8-amino-7-oxononanoate synthase (390 aa).

Residue arginine 19 participates in substrate binding. 105–106 is a pyridoxal 5'-phosphate binding site; the sequence is GY. Substrate is bound at residue histidine 130. Pyridoxal 5'-phosphate contacts are provided by residues serine 177, 202-205, and 234-237; these read DEAH and TFSK. N6-(pyridoxal phosphate)lysine is present on lysine 237. Substrate is bound at residue threonine 351.

This sequence belongs to the class-II pyridoxal-phosphate-dependent aminotransferase family. BioF subfamily. Homodimer. Requires pyridoxal 5'-phosphate as cofactor.

The enzyme catalyses 6-carboxyhexanoyl-[ACP] + L-alanine + H(+) = (8S)-8-amino-7-oxononanoate + holo-[ACP] + CO2. It functions in the pathway cofactor biosynthesis; biotin biosynthesis. In terms of biological role, catalyzes the decarboxylative condensation of pimeloyl-[acyl-carrier protein] and L-alanine to produce 8-amino-7-oxononanoate (AON), [acyl-carrier protein], and carbon dioxide. The polypeptide is Putative 8-amino-7-oxononanoate synthase (bioF) (Geobacillus kaustophilus (strain HTA426)).